Consider the following 301-residue polypeptide: Immune-associated nucleotide-binding protein 5 (301 aa).

Residues Glu-11–Lys-214 enclose the AIG1-type G domain. The segment at Gly-20–Ser-27 is G1. Gly-20–Ser-28 serves as a coordination point for GTP. Residues Cys-46–Lys-50 are G2. A G3 region spans residues Asp-63–Gly-66. The segment at Thr-133 to Asp-136 is G4. The interval Asn-172–Lys-174 is G5. Asn-173 lines the GTP pocket.

The protein belongs to the TRAFAC class TrmE-Era-EngA-EngB-Septin-like GTPase superfamily. AIG1/Toc34/Toc159-like paraseptin GTPase family. IAN subfamily. As to expression, expressed in pollen, cotyledons and lateral roots.

This chain is Immune-associated nucleotide-binding protein 5, found in Arabidopsis thaliana (Mouse-ear cress).